Here is a 366-residue protein sequence, read N- to C-terminus: Chorismate synthase (366 aa).

Positions 48 and 54 each coordinate NADP(+). Residues 125 to 127 (RSS), 238 to 239 (NA), glycine 278, 293 to 297 (KPTSS), and arginine 319 each bind FMN.

The protein belongs to the chorismate synthase family. Homotetramer. FMNH2 serves as cofactor.

The catalysed reaction is 5-O-(1-carboxyvinyl)-3-phosphoshikimate = chorismate + phosphate. Its pathway is metabolic intermediate biosynthesis; chorismate biosynthesis; chorismate from D-erythrose 4-phosphate and phosphoenolpyruvate: step 7/7. Functionally, catalyzes the anti-1,4-elimination of the C-3 phosphate and the C-6 proR hydrogen from 5-enolpyruvylshikimate-3-phosphate (EPSP) to yield chorismate, which is the branch point compound that serves as the starting substrate for the three terminal pathways of aromatic amino acid biosynthesis. This reaction introduces a second double bond into the aromatic ring system. This chain is Chorismate synthase, found in Burkholderia ambifaria (strain MC40-6).